Here is a 253-residue protein sequence, read N- to C-terminus: Allene oxide cyclase 2, chloroplastic (253 aa).

A chloroplast-targeting transit peptide spans 1 to 77; sequence MASSAVSLQS…SQNGNIENPR (77 aa).

This sequence belongs to the allene oxide cyclase family. In terms of tissue distribution, highly expressed in fully developed leaves.

It is found in the plastid. Its subcellular location is the chloroplast. It carries out the reaction (9Z,13S,15Z)-12,13-epoxyoctadeca-9,11,15-trienoate = (9S,13S,15Z)-12-oxophyto-10,15-dienoate. Its function is as follows. Involved in the production of 12-oxo-phytodienoic acid (OPDA), a precursor of jasmonic acid. This Arabidopsis thaliana (Mouse-ear cress) protein is Allene oxide cyclase 2, chloroplastic (AOC2).